A 146-amino-acid polypeptide reads, in one-letter code: Prolactin-inducible protein (146 aa).

Residues 1–28 (MRLLQLLFRASPATLLLVLCLQLGANKA) form the signal peptide. Residue Gln29 is modified to Pyrrolidone carboxylic acid. 2 disulfide bridges follow: Cys65-Cys91 and Cys89-Cys123. Asn105 carries an N-linked (GlcNAc...) asparagine glycan.

This sequence belongs to the PIP family. As to quaternary structure, monomer. Interacts with AZGP1. In terms of tissue distribution, expressed in pathological conditions of the mammary gland and in several exocrine tissues, such as the lacrimal, salivary, and sweat glands.

It is found in the secreted. The protein is Prolactin-inducible protein (PIP) of Homo sapiens (Human).